The chain runs to 125 residues: Large ribosomal subunit protein bL12 (125 aa).

The protein belongs to the bacterial ribosomal protein bL12 family. Homodimer. Part of the ribosomal stalk of the 50S ribosomal subunit. Forms a multimeric L10(L12)X complex, where L10 forms an elongated spine to which 2 to 4 L12 dimers bind in a sequential fashion. Binds GTP-bound translation factors.

Its function is as follows. Forms part of the ribosomal stalk which helps the ribosome interact with GTP-bound translation factors. Is thus essential for accurate translation. This Thioalkalivibrio sulfidiphilus (strain HL-EbGR7) protein is Large ribosomal subunit protein bL12.